The sequence spans 261 residues: Acetoacetate decarboxylase 2 (261 aa).

Catalysis depends on K116, which acts as the Schiff-base intermediate with acetoacetate.

This sequence belongs to the ADC family.

The catalysed reaction is acetoacetate + H(+) = acetone + CO2. In terms of biological role, catalyzes the conversion of acetoacetate to acetone and carbon dioxide. The chain is Acetoacetate decarboxylase 2 from Mesorhizobium japonicum (strain LMG 29417 / CECT 9101 / MAFF 303099) (Mesorhizobium loti (strain MAFF 303099)).